The sequence spans 684 residues: Cyclic nucleotide-gated channel alpha-1 (684 aa).

At 1–161 the chain is on the cytoplasmic side; that stretch reads MKTNIINTWH…PSGNTYYNWL (161 aa). Positions 34–145 are disordered; the sequence is ACSSFSDDDN…TKEKKEEEKK (112 aa). Positions 39-54 are enriched in acidic residues; it reads SDDDNGSLSEESENED. Positions 105–145 are enriched in basic and acidic residues; that stretch reads SKADDKNENKKDPEKKKKKEKEKEKKKKEEKTKEKKEEEKK. Residues 162–183 traverse the membrane as a helical segment; the sequence is FCITLPVMYNWTMIIARACFDE. Residues 184-193 are Extracellular-facing; sequence LQSDYLEYWL. A helical transmembrane segment spans residues 194–214; sequence IFDYVSDVVYLADMFVRTRTG. The Cytoplasmic portion of the chain corresponds to 215–239; sequence YLEQGLLVKDRMKLIEKYKANLQFK. The helical transmembrane segment at 240–258 threads the bilayer; sequence LDVLSVIPTDLLYIKFGWN. Topologically, residues 259–263 are extracellular; that stretch reads YPEIR. The chain crosses the membrane as a helical span at residues 264 to 282; the sequence is LNRLLRISRMFEFFQRTET. The Cytoplasmic portion of the chain corresponds to 283-289; that stretch reads RTNYPNI. The segment at 287 to 395 is ion conduction pathway; that stretch reads PNIFRISNLV…GNIGSMISNM (109 aa). Residues 290-313 traverse the membrane as a helical segment; it reads FRISNLVMYIVIIIHWNACVYYSI. At 314-336 the chain is on the extracellular side; it reads SKAIGFGNDTWVYPDVNDPEFGR. Residue N321 is glycosylated (N-linked (GlcNAc...) asparagine). A run of 2 helical transmembrane segments spans residues 337-371 and 372-396; these read LARK…IFVV and VDFL…SNMN. Positions 354–357 are selectivity filter; it reads TIGE. A C-linker region spans residues 397–473; it reads AARAEFQSRV…DTLKKVRIFA (77 aa). Residues 397–684 are Cytoplasmic-facing; the sequence is AARAEFQSRV…ESELTESLQD (288 aa). The tract at residues 477-597 is cyclic nucleotide-binding domain; the sequence is AGLLVELVLK…EEKGRQILMK (121 aa). 3',5'-cyclic GMP contacts are provided by G537, S540, R553, and T554. Residues R553 and T554 each contribute to the 3',5'-cyclic AMP site. Residues 615 to 669 adopt a coiled-coil conformation; the sequence is LEEKVTRMEGSVDLLQTRFARILAEYESMQQKLKQRLTKVEKFLKPLIETEFSAL.

Belongs to the cyclic nucleotide-gated cation channel (TC 1.A.1.5) family. CNGA1 subfamily. Forms heterotetrameric channels composed of CNGA1 and CNGB1 subunits with 3:1 stoichiometry. May also form cyclic nucleotide-activated homotetrameric channels, that are efficiently activated by saturating cGMP, but poorly activated by saturating cAMP compared to the heterotetramer with CNGB1. The channel binds Ca(2+)-bound CALM1 via CaM1 and CaM2 regions of the CNGB1 subunit; this interaction modulates the affinity of the channel for cNMPs in response to intracellular Ca(2+) levels. Rod cells in the retina and inner medulla of kidney.

Its subcellular location is the cell membrane. It catalyses the reaction Ca(2+)(in) = Ca(2+)(out). The catalysed reaction is Na(+)(in) = Na(+)(out). The enzyme catalyses K(+)(in) = K(+)(out). It carries out the reaction NH4(+)(in) = NH4(+)(out). It catalyses the reaction Rb(+)(in) = Rb(+)(out). The catalysed reaction is Li(+)(in) = Li(+)(out). The enzyme catalyses Cs(+)(in) = Cs(+)(out). Functionally, pore-forming subunit of the rod cyclic nucleotide-gated channel. Mediates rod photoresponses at dim light converting transient changes in intracellular cGMP levels into electrical signals. In the dark, cGMP levels are high and keep the channel open enabling a steady inward current carried by Na(+) and Ca(2+) ions that leads to membrane depolarization and neurotransmitter release from synaptic terminals. Upon photon absorption cGMP levels decline leading to channel closure and membrane hyperpolarization that ultimately slows neurotransmitter release and signals the presence of light, the end point of the phototransduction cascade. Conducts cGMP- and cAMP-gated ion currents, with permeability for monovalent and divalent cations. The selectivity for Ca(2+) over Na(+) increases with cGMP concentrations, whereas the selectivity among monovalent ions is independent of the cGMP levels. The polypeptide is Cyclic nucleotide-gated channel alpha-1 (Cnga1) (Mus musculus (Mouse)).